Consider the following 152-residue polypeptide: Transcriptional regulator MraZ (152 aa).

SpoVT-AbrB domains lie at 5 to 52 and 81 to 124; these read ASAI…PIQE and AHEC…DEAA.

Belongs to the MraZ family. As to quaternary structure, forms oligomers.

The protein localises to the cytoplasm. It is found in the nucleoid. The chain is Transcriptional regulator MraZ from Shewanella halifaxensis (strain HAW-EB4).